Reading from the N-terminus, the 344-residue chain is Sorting nexin-16 (344 aa).

A compositionally biased stretch (pro residues) spans 1 to 10; the sequence is MATPYVPVPM. 2 disordered regions span residues 1 to 66 and 81 to 107; these read MATP…NTSS and ASSI…EDRP. A compositionally biased stretch (polar residues) spans 14–26; that stretch reads NSASSFTTNRNQR. The span at 27–40 shows a compositional bias: low complexity; that stretch reads SSSFGSVSTSSNSS. The span at 41–66 shows a compositional bias: polar residues; it reads KGQLEDSNMGNFKQTSVPDQMDNTSS. In terms of domain architecture, PX spans 105–218; it reads DRPSTPTILG…EFLCLDDPPG (114 aa). A 1,2-diacyl-sn-glycero-3-phospho-(1D-myo-inositol-3-phosphate) contacts are provided by R144, T146, and R184. Residue S222 is modified to Phosphoserine. The stretch at 223–278 forms a coiled coil; that stretch reads LEESRAFCETLEETNYRLQKELLEKQKEMESLKKLLSEKQLHIDTLENRIRTLSLE.

This sequence belongs to the sorting nexin family. In terms of assembly, homooligomer. Interacts with EGFR. Detected in placenta, lung, liver,heart and pancreas.

Its subcellular location is the early endosome membrane. The protein localises to the late endosome membrane. It localises to the cytoplasm. It is found in the lysosome. May be involved in several stages of intracellular trafficking. Plays a role in protein transport from early to late endosomes. Plays a role in protein transport to the lysosome. Promotes degradation of EGFR after EGF signaling. Plays a role in intracellular transport of vesicular stomatitis virus nucleocapsids from the endosome to the cytoplasm. This chain is Sorting nexin-16 (SNX16), found in Homo sapiens (Human).